The sequence spans 255 residues: NAP1-related protein 2 (255 aa).

The stretch at 19–60 (IDAELVLSIEKLQEIQDDLEKINEKASDEVLEVEQKYNVIRK) forms a coiled coil. Residues 213-255 (NPLTYFNNDADEEDFDGDDDGDEEEKEGDSDEDDDEEDEVGEE) form a disordered region. A compositionally biased stretch (acidic residues) spans 221–255 (DADEEDFDGDDDGDEEEKEGDSDEDDDEEDEVGEE).

This sequence belongs to the nucleosome assembly protein (NAP) family. In terms of assembly, can form homomeric and heteromeric protein complexes with NRP1. Binds histones H2A and H2B and associates with chromatin in vivo. In terms of tissue distribution, ubiquitous.

The protein localises to the cytoplasm. It localises to the nucleus. Functionally, acts as a histone H2A/H2B chaperone in nucleosome assembly, playing a critical role for the correct expression of genes involved in root proliferation and patterning. Required with NRP1 for the maintenance of cell proliferation and differentiation in postembryonic root growth. Involved in both intramolecular and intermolecular somatic homologous recombination. In Arabidopsis thaliana (Mouse-ear cress), this protein is NAP1-related protein 2 (NRP2).